We begin with the raw amino-acid sequence, 176 residues long: ATP-dependent protease subunit HslV (176 aa).

The active site involves T2. 3 residues coordinate Na(+): G157, C160, and T163.

Belongs to the peptidase T1B family. HslV subfamily. In terms of assembly, a double ring-shaped homohexamer of HslV is capped on each side by a ring-shaped HslU homohexamer. The assembly of the HslU/HslV complex is dependent on binding of ATP.

It is found in the cytoplasm. It catalyses the reaction ATP-dependent cleavage of peptide bonds with broad specificity.. Allosterically activated by HslU binding. Functionally, protease subunit of a proteasome-like degradation complex believed to be a general protein degrading machinery. The sequence is that of ATP-dependent protease subunit HslV from Pectobacterium atrosepticum (strain SCRI 1043 / ATCC BAA-672) (Erwinia carotovora subsp. atroseptica).